The following is a 624-amino-acid chain: Glutamine--fructose-6-phosphate aminotransferase [isomerizing] (624 aa).

C2 acts as the Nucleophile; for GATase activity in catalysis. The region spanning 2-225 is the Glutamine amidotransferase type-2 domain; it reads CGIVGYVGRR…QDQAVVITAD (224 aa). SIS domains are found at residues 297–436 and 469–614; these read SDQE…ARGT and LAHR…VDKP. Catalysis depends on K619, which acts as the For Fru-6P isomerization activity.

Homodimer.

It localises to the cytoplasm. The catalysed reaction is D-fructose 6-phosphate + L-glutamine = D-glucosamine 6-phosphate + L-glutamate. Its function is as follows. Catalyzes the first step in hexosamine metabolism, converting fructose-6P into glucosamine-6P using glutamine as a nitrogen source. This is Glutamine--fructose-6-phosphate aminotransferase [isomerizing] from Mycobacterium bovis (strain ATCC BAA-935 / AF2122/97).